A 258-amino-acid polypeptide reads, in one-letter code: NAD kinase (258 aa).

Catalysis depends on Asp51, which acts as the Proton acceptor. NAD(+) is bound by residues 51–52, Arg56, 119–120, Lys130, Asp149, 160–165, and Ala184; these read DG, ND, and TAYSLS.

This sequence belongs to the NAD kinase family. The cofactor is a divalent metal cation.

The protein resides in the cytoplasm. The catalysed reaction is NAD(+) + ATP = ADP + NADP(+) + H(+). In terms of biological role, involved in the regulation of the intracellular balance of NAD and NADP, and is a key enzyme in the biosynthesis of NADP. Catalyzes specifically the phosphorylation on 2'-hydroxyl of the adenosine moiety of NAD to yield NADP. This chain is NAD kinase, found in Thermotoga neapolitana (strain ATCC 49049 / DSM 4359 / NBRC 107923 / NS-E).